A 520-amino-acid polypeptide reads, in one-letter code: Serine/threonine-protein kinases drp72 (520 aa).

A Protein kinase domain is found at 20 to 281 (YTLQWIVGHG…NELARAVSAV (262 aa)). ATP contacts are provided by residues 26 to 34 (VGHGGMSTV) and Lys49. Asp148 functions as the Proton acceptor in the catalytic mechanism. Disordered stretches follow at residues 315-334 (ARPT…RQEK) and 366-504 (SGDS…DAAD). The span at 374–394 (TPETITQTVTPTETTTSEEPT) shows a compositional bias: low complexity. Positions 395–411 (LAPPPVQPTRQPVPTPD) are enriched in pro residues. The segment covering 416 to 429 (RLPTTTQESPTRVS) has biased composition (polar residues). The span at 440 to 449 (EQTTPGGQPP) shows a compositional bias: low complexity. Residues 450–460 (LSTLPTSLGWQ) are compositionally biased toward polar residues. The segment covering 469-484 (QGNPNTTGNPANPGTP) has biased composition (low complexity). Residues 485 to 496 (GTTGGNGTGNAG) show a composition bias toward gly residues.

This sequence belongs to the protein kinase superfamily. Ser/Thr protein kinase family.

The enzyme catalyses L-seryl-[protein] + ATP = O-phospho-L-seryl-[protein] + ADP + H(+). The catalysed reaction is L-threonyl-[protein] + ATP = O-phospho-L-threonyl-[protein] + ADP + H(+). This Corynebacterium efficiens (strain DSM 44549 / YS-314 / AJ 12310 / JCM 11189 / NBRC 100395) protein is Serine/threonine-protein kinases drp72.